A 1384-amino-acid chain; its full sequence is Hepatocyte growth factor receptor (1384 aa).

The signal sequence occupies residues 1–24; sequence MKAPAVLAPGILVLLFTFVQKSNG. Over 25 to 933 the chain is Extracellular; the sequence is ECKEALVKSR…VIVQPDQNFT (909 aa). The 490-residue stretch at 27 to 516 folds into the Sema domain; that stretch reads KEALVKSRMN…TGKKITKIPL (490 aa). An N-linked (GlcNAc...) asparagine glycan is attached at N45. 4 disulfides stabilise this stretch: C95–C101, C98–C160, C133–C141, and C173–C176. N-linked (GlcNAc...) asparagine glycosylation is present at N106. A glycan (N-linked (GlcNAc...) asparagine) is linked at N149. Residues N203 and N359 are each glycosylated (N-linked (GlcNAc...) asparagine). Disulfide bonds link C299–C364 and C386–C398. 2 N-linked (GlcNAc...) asparagine glycosylation sites follow: N400 and N406. 4 disulfide bridges follow: C521/C539, C527/C562, C530/C546, and C542/C552. IPT/TIG domains follow at residues 564-656, 658-740, and 743-837; these read PTIY…FSYV, PIIT…FIYR, and PIVY…LIYV. Residue T583 is glycosylated (O-linked (Man) threonine). N-linked (GlcNAc...) asparagine glycosylation is found at N608 and N636. Residues T677 and T762 are each glycosylated (O-linked (Man) threonine). 3 N-linked (GlcNAc...) asparagine glycosylation sites follow: N786, N880, and N931. Residues 934–956 traverse the membrane as a helical segment; it reads GLIVGVVSISIILLLLLGLFLWL. The Cytoplasmic segment spans residues 957-1384; it reads KKRKQIKDLG…NVSGEDDDDT (428 aa). The residue at position 967 (S967) is a Phosphoserine. The residue at position 978 (T978) is a Phosphothreonine. 3 positions are modified to phosphoserine: S991, S998, and S1001. Y1004 is modified (phosphotyrosine). The 268-residue stretch at 1079-1346 folds into the Protein kinase domain; it reads VHFNEVIGRG…RISVIFSTFI (268 aa). Residues 1085–1093 and K1111 each bind ATP; that span reads IGRGHFGCV. D1205 functions as the Proton acceptor in the catalytic mechanism. Residues 1213–1382 are interaction with RANBP9; sequence LDEKFTVKVA…QDNVSGEDDD (170 aa). Y1231 carries the phosphotyrosine modification. Y1235 and Y1236 each carry phosphotyrosine; by autocatalysis. T1290 is modified (phosphothreonine). Residues 1321 to 1360 are interaction with MUC20; that stretch reads WHPKAELRPSFSELVSRISVIFSTFIGEHYVHVNATYVNV. Y1350 and Y1357 each carry phosphotyrosine; by autocatalysis. Y1366 carries the post-translational modification Phosphotyrosine.

Belongs to the protein kinase superfamily. Tyr protein kinase family. Heterodimer made of an alpha chain (50 kDa) and a beta chain (145 kDa) which are disulfide linked. Binds PLXNB1. Interacts when phosphorylated with downstream effectors including STAT3, PIK3R1, SRC, PCLG1, GRB2 and GAB1. Interacts with SPSB1, SPSB2 and SPSB4. Interacts with INPP5D/SHIP1. When phosphorylated at Tyr-1357, interacts with INPPL1/SHIP2. Interacts with RANBP9 and RANBP10, as well as SPSB1, SPSB2, SPSB3 and SPSB4. SPSB1 binding occurs in the presence and in the absence of HGF, however HGF treatment has a positive effect on this interaction. Interacts with MUC20; prevents interaction with GRB2 and suppresses hepatocyte growth factor-induced cell proliferation. Interacts with GRB10. Interacts with PTPN1 and PTPN2. Interacts with HSP90AA1 and HSP90AB1; the interaction suppresses MET kinase activity. Interacts with tensin TNS3. Interacts (when phosphorylated) with tensin TNS4 (via SH2 domain); the interaction increases MET protein stability by inhibiting MET endocytosis and subsequent lysosomal degradation. Autophosphorylated in response to ligand binding on Tyr-1235 and Tyr-1236 in the kinase domain leading to further phosphorylation of Tyr-1350 and Tyr-1357 in the C-terminal multifunctional docking site. Dephosphorylated by PTPRJ at Tyr-1350 and Tyr-1366. Dephosphorylated by PTPN1 and PTPN2. In terms of processing, ubiquitinated. Ubiquitination by CBL regulates the receptor stability and activity through proteasomal degradation. Post-translationally, O-mannosylation of IPT/TIG domains by TMEM260 is required for protein maturation. O-mannosylated residues are composed of single mannose glycans that are not elongated or modified. Expressed in many tissues, including liver, lung, heart, spleen and mammary gland.

Its subcellular location is the membrane. The catalysed reaction is L-tyrosyl-[protein] + ATP = O-phospho-L-tyrosyl-[protein] + ADP + H(+). With respect to regulation, in its inactive state, the C-terminal tail interacts with the catalytic domain and inhibits the kinase activity. Upon ligand binding, the C-terminal tail is displaced and becomes phosphorylated, thus increasing the kinase activity. In terms of biological role, receptor tyrosine kinase that transduces signals from the extracellular matrix into the cytoplasm by binding to hepatocyte growth factor/HGF ligand. Regulates many physiological processes including proliferation, scattering, morphogenesis and survival. Ligand binding at the cell surface induces autophosphorylation of MET on its intracellular domain that provides docking sites for downstream signaling molecules. Following activation by ligand, interacts with the PI3-kinase subunit PIK3R1, PLCG1, SRC, GRB2, STAT3 or the adapter GAB1. Recruitment of these downstream effectors by MET leads to the activation of several signaling cascades including the RAS-ERK, PI3 kinase-AKT, or PLCgamma-PKC. The RAS-ERK activation is associated with the morphogenetic effects while PI3K/AKT coordinates prosurvival effects. During embryonic development, MET signaling plays a role in gastrulation, development and migration of muscles and neuronal precursors, angiogenesis and kidney formation. In adults, participates in wound healing as well as organ regeneration and tissue remodeling. Also promotes differentiation and proliferation of hematopoietic cells. This is Hepatocyte growth factor receptor (MET) from Bos taurus (Bovine).